A 743-amino-acid chain; its full sequence is Catalase-peroxidase (743 aa).

The tract at residues 1–29 (MNAESGENAGGGCPLGHGAGAPRKRPSNR) is disordered. The span at 8–19 (NAGGGCPLGHGA) shows a compositional bias: gly residues. A cross-link (tryptophyl-tyrosyl-methioninium (Trp-Tyr) (with M-248)) is located at residues 100–222 (WHSAGTYRIT…LGAVQMGLIY (123 aa)). H101 functions as the Proton acceptor in the catalytic mechanism. The segment at residues 222-248 (YVNPEGPNGNPDPKAAAVDIRETFARM) is a cross-link (tryptophyl-tyrosyl-methioninium (Tyr-Met) (with W-100)). H263 is a heme b binding site.

Belongs to the peroxidase family. Peroxidase/catalase subfamily. In terms of assembly, homodimer or homotetramer. Heme b serves as cofactor. In terms of processing, formation of the three residue Trp-Tyr-Met cross-link is important for the catalase, but not the peroxidase activity of the enzyme.

It catalyses the reaction H2O2 + AH2 = A + 2 H2O. The enzyme catalyses 2 H2O2 = O2 + 2 H2O. Its function is as follows. Bifunctional enzyme with both catalase and broad-spectrum peroxidase activity. This is Catalase-peroxidase from Stutzerimonas stutzeri (strain A1501) (Pseudomonas stutzeri).